The chain runs to 86 residues: Exopolysaccharide production repressor protein (86 aa).

A helical transmembrane segment spans residues 18–38 (FAVTLAASVFLQVVYFLSLLF). The tract at residues 44–86 (TRESDRSIHSGTRQADQPQKRDRDKTEQSNVPKLDPRRKRRTP) is disordered. The span at 61 to 70 (PQKRDRDKTE) shows a compositional bias: basic and acidic residues.

It localises to the cell membrane. It participates in glycan metabolism; exopolysaccharide biosynthesis. Functionally, inhibition of exopolysaccharide synthesis (EPS) and nodulation ability (NOD). In Rhizobium leguminosarum bv. phaseoli, this protein is Exopolysaccharide production repressor protein (exoX).